A 352-amino-acid chain; its full sequence is Putative pectinesterase 11 (352 aa).

A helical membrane pass occupies residues alanine 13–alanine 35. Asparagine 76 carries an N-linked (GlcNAc...) asparagine glycan. Aspartate 175 acts as the Proton donor in catalysis. Residue aspartate 196 is the Nucleophile of the active site. N-linked (GlcNAc...) asparagine glycosylation occurs at asparagine 218. 2 residues coordinate substrate: arginine 252 and tryptophan 254. A disordered region spans residues leucine 332–asparagine 352. A compositionally biased stretch (polar residues) spans proline 343 to asparagine 352.

Belongs to the pectinesterase family.

It localises to the membrane. It carries out the reaction [(1-&gt;4)-alpha-D-galacturonosyl methyl ester](n) + n H2O = [(1-&gt;4)-alpha-D-galacturonosyl](n) + n methanol + n H(+). Its pathway is glycan metabolism; pectin degradation; 2-dehydro-3-deoxy-D-gluconate from pectin: step 1/5. Functionally, acts in the modification of cell walls via demethylesterification of cell wall pectin. The sequence is that of Putative pectinesterase 11 (PME11) from Arabidopsis thaliana (Mouse-ear cress).